A 129-amino-acid chain; its full sequence is Large ribosomal subunit protein uL22 (129 aa).

This sequence belongs to the universal ribosomal protein uL22 family. As to quaternary structure, part of the 50S ribosomal subunit.

This protein binds specifically to 23S rRNA; its binding is stimulated by other ribosomal proteins, e.g. L4, L17, and L20. It is important during the early stages of 50S assembly. It makes multiple contacts with different domains of the 23S rRNA in the assembled 50S subunit and ribosome. Its function is as follows. The globular domain of the protein is located near the polypeptide exit tunnel on the outside of the subunit, while an extended beta-hairpin is found that lines the wall of the exit tunnel in the center of the 70S ribosome. This Brucella suis biovar 1 (strain 1330) protein is Large ribosomal subunit protein uL22.